We begin with the raw amino-acid sequence, 63 residues long: Large ribosomal subunit protein bL28 (63 aa).

It belongs to the bacterial ribosomal protein bL28 family.

The polypeptide is Large ribosomal subunit protein bL28 (Treponema denticola (strain ATCC 35405 / DSM 14222 / CIP 103919 / JCM 8153 / KCTC 15104)).